Consider the following 308-residue polypeptide: Dual oxidase maturation factor 1 (308 aa).

The Extracellular segment spans residues 1–21 (MQANIFPFYPQPRTSFKFDTK). The chain crosses the membrane as a helical span at residues 22–42 (IIEIIIICIVTACTFIIILPG). Over 43 to 49 (IRGKSRS) the chain is Cytoplasmic. Residues 50 to 70 (IWLFRILTSLFIGAVILAVNF) traverse the membrane as a helical segment. The Extracellular portion of the chain corresponds to 71–172 (TSDWETGIVT…SPCGLFQQYC (102 aa)). Residues Asn94, Asn107, and Asn119 are each glycosylated (N-linked (GlcNAc...) asparagine). Residues 173 to 195 (ISTYYSSEIMWVAFGSWILYNVL) form a helical membrane-spanning segment. Topologically, residues 196-199 (FSMP) are cytoplasmic. The helical transmembrane segment at 200–220 (VILYGICMMFVTAICMLVSLI) threads the bilayer. Topologically, residues 221 to 247 (SFASVRQAPVCNIHFGNAVLKTHFGVS) are extracellular. Residues 248–268 (YWLSLVTGLFCLIVSLVLLFL) form a helical membrane-spanning segment. Topologically, residues 269-308 (YKTQPKVIRLIFSYGEEEDLSDKSENEEEHSSALSLNEML) are cytoplasmic.

The protein belongs to the DUOXA family.

It localises to the membrane. In terms of biological role, possible role in maturation and transport from the endoplasmic reticulum to the plasma membrane of functional dual oxidase. This chain is Dual oxidase maturation factor 1 (duoxa1), found in Xenopus tropicalis (Western clawed frog).